Reading from the N-terminus, the 297-residue chain is uncharacterized protein (297 aa).

Disordered stretches follow at residues asparagine 19–glutamate 133, alanine 147–alanine 214, and glutamate 226–alanine 277. The span at glutamate 41–aspartate 52 shows a compositional bias: basic and acidic residues. Over residues proline 77 to phenylalanine 87 the composition is skewed to acidic residues. Residues proline 88–arginine 101 are compositionally biased toward polar residues. 2 stretches are compositionally biased toward basic and acidic residues: residues alanine 147 to tryptophan 161 and isoleucine 236 to glycine 268.

This is an uncharacterized protein from Caenorhabditis elegans.